We begin with the raw amino-acid sequence, 327 residues long: Cysteine synthase (327 aa).

Lys65 is modified (N6-(pyridoxal phosphate)lysine). Pyridoxal 5'-phosphate contacts are provided by residues Asn95, 200-204 (GTGGT), and Ser282.

Belongs to the cysteine synthase/cystathionine beta-synthase family. Requires pyridoxal 5'-phosphate as cofactor.

The catalysed reaction is O-acetyl-L-serine + hydrogen sulfide = L-cysteine + acetate. It functions in the pathway amino-acid biosynthesis; L-cysteine biosynthesis; L-cysteine from L-serine: step 2/2. This chain is Cysteine synthase (cysM), found in Aquifex aeolicus (strain VF5).